The primary structure comprises 120 residues: Large ribosomal subunit protein bL36m (120 aa).

It belongs to the bacterial ribosomal protein bL36 family. Component of the mitochondrial ribosome large subunit (39S) which comprises a 16S rRNA and about 50 distinct proteins.

Its subcellular location is the mitochondrion. In Osmerus mordax (Rainbow smelt), this protein is Large ribosomal subunit protein bL36m (mrpl36).